A 63-amino-acid polypeptide reads, in one-letter code: uncharacterized protein (63 aa).

This is an uncharacterized protein from Archaeoglobus fulgidus (strain ATCC 49558 / DSM 4304 / JCM 9628 / NBRC 100126 / VC-16).